Reading from the N-terminus, the 308-residue chain is D-alanine--D-alanine ligase B (308 aa).

Positions 102 to 302 (KKVAAAAGVV…FAELLSWMVE (201 aa)) constitute an ATP-grasp domain. ATP is bound at residue 128-183 (PMKPPYVVKPVREGSSFGVVIVKEDQPHPPQVIGSADWKYGDEVMVEGYIAGRELT). 3 residues coordinate Mg(2+): Asp-252, Glu-269, and Asn-271.

The protein belongs to the D-alanine--D-alanine ligase family. It depends on Mg(2+) as a cofactor. Requires Mn(2+) as cofactor.

The protein resides in the cytoplasm. It catalyses the reaction 2 D-alanine + ATP = D-alanyl-D-alanine + ADP + phosphate + H(+). Its pathway is cell wall biogenesis; peptidoglycan biosynthesis. Functionally, cell wall formation. The chain is D-alanine--D-alanine ligase B from Brucella suis biovar 1 (strain 1330).